An 84-amino-acid polypeptide reads, in one-letter code: MKNGCNPCVIIDLFKGDKGLLEKLNGDTVYGISVITLFELQCGSLKEREEIFLEKIPKLNFEESSAKLAGKIFRELKKGAEFQR.

To M.jannaschii MJ1121.

This is an uncharacterized protein from Archaeoglobus fulgidus (strain ATCC 49558 / DSM 4304 / JCM 9628 / NBRC 100126 / VC-16).